Here is a 335-residue protein sequence, read N- to C-terminus: MSHIAKIYTDKDTTLDPMKGKKIAVLGYGSQGRAWALNLRDSGLQVTVGLEREGKSWEQAKADGFTPKKTEDAVKDADVVIFLVPDMAQRLVYRERVQPYLREGMDLVFAHGFNIHYRLIEPPSNVDVYMVAPKGPGPIVRDFYVKGGGVPVLVAVHQNHSGKALEKALAIAKALGGTRAGAIETTFKEETETDLIGEQTILVGGVMELMKAAFETLVEMGYQPEVAYFETINELKMIVDLIYDKGFMGMLRAVSDTAKYGGFTVGKQVINEETRRRLREAAEKVRSGKFAEEWIEEYGRGSPTLSKGLEEMDKSLEEQTGRRLKEIIERGRPKS.

One can recognise a KARI N-terminal Rossmann domain in the interval 5-185 (AKIYTDKDTT…GGTRAGAIET (181 aa)). Residues 28–31 (YGSQ), R52, S56, and 86–89 (DMAQ) each bind NADP(+). H111 is a catalytic residue. NADP(+) is bound at residue G137. Positions 186–331 (TFKEETETDL…RRLKEIIERG (146 aa)) constitute a KARI C-terminal knotted domain. 4 residues coordinate Mg(2+): D194, E198, E230, and E234. S255 lines the substrate pocket. Residues 301–335 (GSPTLSKGLEEMDKSLEEQTGRRLKEIIERGRPKS) form a disordered region. A compositionally biased stretch (basic and acidic residues) spans 308–335 (GLEEMDKSLEEQTGRRLKEIIERGRPKS).

The protein belongs to the ketol-acid reductoisomerase family. Mg(2+) serves as cofactor.

It carries out the reaction (2R)-2,3-dihydroxy-3-methylbutanoate + NAD(+) = (2S)-2-acetolactate + NADH + H(+). The enzyme catalyses (2R)-2,3-dihydroxy-3-methylbutanoate + NADP(+) = (2S)-2-acetolactate + NADPH + H(+). It participates in amino-acid biosynthesis; L-isoleucine biosynthesis; L-isoleucine from 2-oxobutanoate: step 2/4. The protein operates within amino-acid biosynthesis; L-valine biosynthesis; L-valine from pyruvate: step 2/4. In terms of biological role, involved in the biosynthesis of branched-chain amino acids (BCAA). Catalyzes an alkyl-migration followed by a ketol-acid reduction of (S)-2-acetolactate (S2AL) to yield (R)-2,3-dihydroxy-isovalerate. In the isomerase reaction, S2AL is rearranged via a Mg-dependent methyl migration to produce 3-hydroxy-3-methyl-2-ketobutyrate (HMKB). In the reductase reaction, this 2-ketoacid undergoes a metal-dependent reduction by NADPH or NADH to yield (R)-2,3-dihydroxy-isovalerate. This Metallosphaera sedula (strain ATCC 51363 / DSM 5348 / JCM 9185 / NBRC 15509 / TH2) protein is Ketol-acid reductoisomerase (NAD(P)(+)).